Reading from the N-terminus, the 635-residue chain is Probable ethylene response sensor 2 (635 aa).

3 consecutive transmembrane segments (helical) span residues 24–44, 59–79, and 94–114; these read ISDF…IYFV, FGAF…TFAI, and ATAV…PDLL. The Cu cation site is built by C66 and H70. Residues 159-308 form the GAF domain; that stretch reads DRHTILRTTL…VVADQVAVAL (150 aa). Positions 351-589 constitute a Histidine kinase domain; it reads VMNHEMRTPM…MFFVKLGMPE (239 aa). Position 354 is a phosphohistidine; by autocatalysis (H354).

The protein belongs to the ethylene receptor family. Homodimer. The cofactor is Cu cation.

It localises to the endoplasmic reticulum membrane. The enzyme catalyses ATP + protein L-histidine = ADP + protein N-phospho-L-histidine.. In terms of biological role, ethylene receptor related to bacterial two-component regulators. Acts as a negative regulator of ethylene signaling. May play a role in the regulation of flowering by up-regulating GI (GIGANTEA) and RCN1 and regulate starch accumulation by down-regulating the alpha-amylase AMY3D. In Oryza sativa subsp. japonica (Rice), this protein is Probable ethylene response sensor 2 (ERS2).